A 380-amino-acid chain; its full sequence is Phthiodiolone/phenolphthiodiolone dimycocerosates ketoreductase (380 aa).

The protein belongs to the mer family. Phthiodiolone/phenolphthiodiolone dimycocerosates ketoreductase subfamily.

Its function is as follows. Catalyzes the reduction of the keto moiety of phthiodiolone dimycocerosates (DIM B) and glycosylated phenolphthiodiolone dimycocerosates to form the intermediate compounds phthiotriol and glycosylated phenolphthiotriol dimycocerosates during phthiocerol dimycocerosates (DIM A) and glycosylated phenolphthiocerol dimycocerosates (PGL) biosynthesis. This is Phthiodiolone/phenolphthiodiolone dimycocerosates ketoreductase from Mycobacterium sp. (strain JLS).